We begin with the raw amino-acid sequence, 623 residues long: Xaa-Pro aminopeptidase 1 (623 aa).

Arg-77 serves as a coordination point for a peptide. Lys-304 bears the N6-acetyllysine mark. His-395 is an a peptide binding site. Mn(2+)-binding residues include Asp-415, Asp-426, and His-489. Positions 489, 498, and 523 each coordinate a peptide. Residues Glu-523 and Glu-537 each coordinate Mn(2+).

Belongs to the peptidase M24B family. Homodimer. Mn(2+) is required as a cofactor.

The protein resides in the cytoplasm. It is found in the cytosol. The catalysed reaction is Release of any N-terminal amino acid, including proline, that is linked to proline, even from a dipeptide or tripeptide.. Metalloaminopeptidase that catalyzes the removal of a penultimate prolyl residue from the N-termini of peptides, such as Arg-Pro-Pro. Contributes to the degradation of bradykinin. This chain is Xaa-Pro aminopeptidase 1, found in Mus musculus (Mouse).